A 204-amino-acid polypeptide reads, in one-letter code: Dephospho-CoA kinase (204 aa).

Residues 12–204 (RIGVTGGIAS…AWRDQISSIC (193 aa)) enclose the DPCK domain. 20 to 25 (ASGKSS) contributes to the ATP binding site.

It belongs to the CoaE family.

The protein localises to the cytoplasm. It catalyses the reaction 3'-dephospho-CoA + ATP = ADP + CoA + H(+). It functions in the pathway cofactor biosynthesis; coenzyme A biosynthesis; CoA from (R)-pantothenate: step 5/5. Functionally, catalyzes the phosphorylation of the 3'-hydroxyl group of dephosphocoenzyme A to form coenzyme A. The polypeptide is Dephospho-CoA kinase (Prochlorococcus marinus (strain MIT 9313)).